Reading from the N-terminus, the 388-residue chain is Succinate--CoA ligase [ADP-forming] subunit beta (388 aa).

The 236-residue stretch at 9 to 244 (KAIFRSMGVA…LEEEDPKEIE (236 aa)) folds into the ATP-grasp domain. ATP-binding positions include K46, 53 to 55 (GRG), E99, C102, and E107. Mg(2+) contacts are provided by N199 and D213. Substrate contacts are provided by residues N264 and 321 to 323 (GIM).

The protein belongs to the succinate/malate CoA ligase beta subunit family. In terms of assembly, heterotetramer of two alpha and two beta subunits. It depends on Mg(2+) as a cofactor.

The enzyme catalyses succinate + ATP + CoA = succinyl-CoA + ADP + phosphate. It carries out the reaction GTP + succinate + CoA = succinyl-CoA + GDP + phosphate. It participates in carbohydrate metabolism; tricarboxylic acid cycle; succinate from succinyl-CoA (ligase route): step 1/1. In terms of biological role, succinyl-CoA synthetase functions in the citric acid cycle (TCA), coupling the hydrolysis of succinyl-CoA to the synthesis of either ATP or GTP and thus represents the only step of substrate-level phosphorylation in the TCA. The beta subunit provides nucleotide specificity of the enzyme and binds the substrate succinate, while the binding sites for coenzyme A and phosphate are found in the alpha subunit. This chain is Succinate--CoA ligase [ADP-forming] subunit beta, found in Staphylococcus saprophyticus subsp. saprophyticus (strain ATCC 15305 / DSM 20229 / NCIMB 8711 / NCTC 7292 / S-41).